Consider the following 409-residue polypeptide: Pentatricopeptide repeat-containing protein At5g09450, mitochondrial (409 aa).

Residues 1-38 constitute a mitochondrion transit peptide; sequence MATRSLFHSLRCRLTNNGVLGSNFIRNAESSRFSKSYN. PPR repeat units lie at residues 155 to 189, 191 to 225, 226 to 256, 262 to 296, 298 to 332, and 333 to 367; these read TAETYTSLLHAYAASKQTERAEALFKRIIESDSLT, GAITYNEMMTLYMSVGQVEKVPEVIEVLKQKKVSP, DIFTYNLWLSSCAATFNIDELRKILEEMRHD, GWVRYIDLTSIYINSSRVTNAESTLPVEAEKSISQ, EWITYDFLMILHTGLGNKVMIDQIWKSLRNTNQIL, and SSRSYICVLSSYLMLGHLREAEEIIHQWKESKTTE.

Belongs to the PPR family. P subfamily.

It is found in the mitochondrion. This Arabidopsis thaliana (Mouse-ear cress) protein is Pentatricopeptide repeat-containing protein At5g09450, mitochondrial.